A 201-amino-acid chain; its full sequence is Small ribosomal subunit protein uS4 (201 aa).

In terms of domain architecture, S4 RNA-binding spans 91–157; the sequence is SRLDNVIYRA…VPFQIARETV (67 aa).

This sequence belongs to the universal ribosomal protein uS4 family. As to quaternary structure, part of the 30S ribosomal subunit. Contacts protein S5. The interaction surface between S4 and S5 is involved in control of translational fidelity.

One of the primary rRNA binding proteins, it binds directly to 16S rRNA where it nucleates assembly of the body of the 30S subunit. Functionally, with S5 and S12 plays an important role in translational accuracy. This chain is Small ribosomal subunit protein uS4, found in Mycobacterium leprae (strain Br4923).